The following is a 241-amino-acid chain: Copper transport protein CTR3 (241 aa).

The Lumenal segment spans residues 1–41 (MNMGGSSSTAAKKATCKISMLWNWYTIDTCFIARSWRNDTK). Residues 42 to 62 (GKFAGSCIGCFALVVVAQWLT) traverse the membrane as a helical segment. Residues 63-159 (RFSRQFDVEL…SCCTLITPVD (97 aa)) are Cytoplasmic-facing. Residues 160 to 180 (LYPTFLDHMIRVTIFVLQWGL) traverse the membrane as a helical segment. Residues 181–182 (SY) are Lumenal-facing. Residues 183 to 203 (IIMLLFMYYNGYIIISCLIGA) form a helical membrane-spanning segment. The Cytoplasmic segment spans residues 204–241 (IVGRFIFCYEPLGSLGANGSAQGTVSYDKESDDRKCCL).

The protein belongs to the copper transporter (Ctr) (TC 1.A.56) family. SLC31A subfamily.

Its subcellular location is the cytoplasmic vesicle membrane. Functionally, required for high affinity copper (probably reduced Cu I) transport into the cell. This chain is Copper transport protein CTR3 (CTR3), found in Saccharomyces cerevisiae (strain ATCC 204508 / S288c) (Baker's yeast).